Here is a 393-residue protein sequence, read N- to C-terminus: NAD(P)H-quinone oxidoreductase subunit H, chloroplastic (393 aa).

It belongs to the complex I 49 kDa subunit family. In terms of assembly, NDH is composed of at least 16 different subunits, 5 of which are encoded in the nucleus.

It localises to the plastid. The protein localises to the chloroplast thylakoid membrane. The enzyme catalyses a plastoquinone + NADH + (n+1) H(+)(in) = a plastoquinol + NAD(+) + n H(+)(out). It catalyses the reaction a plastoquinone + NADPH + (n+1) H(+)(in) = a plastoquinol + NADP(+) + n H(+)(out). Functionally, NDH shuttles electrons from NAD(P)H:plastoquinone, via FMN and iron-sulfur (Fe-S) centers, to quinones in the photosynthetic chain and possibly in a chloroplast respiratory chain. The immediate electron acceptor for the enzyme in this species is believed to be plastoquinone. Couples the redox reaction to proton translocation, and thus conserves the redox energy in a proton gradient. In Trifolium subterraneum (Subterranean clover), this protein is NAD(P)H-quinone oxidoreductase subunit H, chloroplastic.